We begin with the raw amino-acid sequence, 380 residues long: Cytochrome b (380 aa).

A run of 4 helical transmembrane segments spans residues 34 to 54, 78 to 99, 114 to 134, and 179 to 199; these read FGSLLGICLATQILTGLLLAA, WLIRNLHANGASFFFICIYLHI, WNTGIILLLTLMATAFVGYVL, and FFTLHFLLPFMIAGLTLIHLT. Residues His84 and His98 each coordinate heme b. Residues His183 and His197 each coordinate heme b. His202 is a binding site for a ubiquinone. The next 4 membrane-spanning stretches (helical) occupy residues 227–247, 289–309, 321–341, and 348–368; these read TKDILGFILLLLPLTTLALFS, LGGVLALAASVLILFLIPLLH, LSQLLFWTLVANLTILTWIGS, and FIIIGQLASLTYFTILLILFP.

It belongs to the cytochrome b family. As to quaternary structure, the cytochrome bc1 complex contains 11 subunits: 3 respiratory subunits (MT-CYB, CYC1 and UQCRFS1), 2 core proteins (UQCRC1 and UQCRC2) and 6 low-molecular weight proteins (UQCRH/QCR6, UQCRB/QCR7, UQCRQ/QCR8, UQCR10/QCR9, UQCR11/QCR10 and a cleavage product of UQCRFS1). This cytochrome bc1 complex then forms a dimer. Heme b serves as cofactor.

The protein resides in the mitochondrion inner membrane. Its function is as follows. Component of the ubiquinol-cytochrome c reductase complex (complex III or cytochrome b-c1 complex) that is part of the mitochondrial respiratory chain. The b-c1 complex mediates electron transfer from ubiquinol to cytochrome c. Contributes to the generation of a proton gradient across the mitochondrial membrane that is then used for ATP synthesis. The sequence is that of Cytochrome b (MT-CYB) from Eudyptes chrysocome (Western rockhopper penguin).